The following is a 71-amino-acid chain: Small ribosomal subunit protein eS17 (71 aa).

The protein belongs to the eukaryotic ribosomal protein eS17 family.

This Pyrobaculum islandicum (strain DSM 4184 / JCM 9189 / GEO3) protein is Small ribosomal subunit protein eS17.